The primary structure comprises 376 residues: Histidinol dehydrogenase (376 aa).

2 residues coordinate NAD(+): Tyr-100 and Asn-182. 3 residues coordinate substrate: Ser-205, Gln-227, and His-230. Zn(2+)-binding residues include Gln-227 and His-230. Catalysis depends on proton acceptor residues Glu-275 and His-276. Residues His-276, Asp-309, Glu-363, and His-368 each coordinate substrate. Residue Asp-309 participates in Zn(2+) binding. His-368 is a binding site for Zn(2+).

Belongs to the histidinol dehydrogenase family. Zn(2+) serves as cofactor.

It catalyses the reaction L-histidinol + 2 NAD(+) + H2O = L-histidine + 2 NADH + 3 H(+). Its pathway is amino-acid biosynthesis; L-histidine biosynthesis; L-histidine from 5-phospho-alpha-D-ribose 1-diphosphate: step 9/9. Its function is as follows. Catalyzes the sequential NAD-dependent oxidations of L-histidinol to L-histidinaldehyde and then to L-histidine. The polypeptide is Histidinol dehydrogenase (Thermococcus kodakarensis (strain ATCC BAA-918 / JCM 12380 / KOD1) (Pyrococcus kodakaraensis (strain KOD1))).